We begin with the raw amino-acid sequence, 1040 residues long: Multidrug resistance protein MdtB (1040 aa).

11 helical membrane passes run 15–37 (LFIM…GIIG), 345–362 (FELM…YLFL), 367–389 (ATII…MVFL), 396–418 (LTLM…VIEN), 438–460 (GEIG…PLLF), 472–494 (FAIT…TPMM), 535–557 (HPWL…WVFI), 867–889 (VWLI…ESFI), 909–931 (LMIA…IGIV), 968–990 (ILMT…GVGA), and 1000–1022 (MVGG…YLLF).

It belongs to the resistance-nodulation-cell division (RND) (TC 2.A.6) family. MdtB subfamily. In terms of assembly, part of a tripartite efflux system composed of MdtA, MdtB and MdtC. MdtB forms a heteromultimer with MdtC.

The protein localises to the cell inner membrane. In terms of biological role, the MdtABC tripartite complex confers resistance against novobiocin and deoxycholate. This is Multidrug resistance protein MdtB from Escherichia coli O157:H7.